The chain runs to 201 residues: Peptide deformylase (201 aa).

Residues C121 and H163 each coordinate Fe cation. Residue E164 is part of the active site. Position 167 (H167) interacts with Fe cation.

It belongs to the polypeptide deformylase family. Fe(2+) is required as a cofactor.

It carries out the reaction N-terminal N-formyl-L-methionyl-[peptide] + H2O = N-terminal L-methionyl-[peptide] + formate. In terms of biological role, removes the formyl group from the N-terminal Met of newly synthesized proteins. Requires at least a dipeptide for an efficient rate of reaction. N-terminal L-methionine is a prerequisite for activity but the enzyme has broad specificity at other positions. The chain is Peptide deformylase from Synechococcus sp. (strain CC9605).